A 274-amino-acid chain; its full sequence is MQAILSSWFVQGMIKATSDMWLKGWDERNGGNVSLRLTAEDVTPYESDFSPQPRHEALSQPMPELADCWFIVTGSGKFFRNVQLDPADSLVVLQVDSDGKGYRIFWGLTNGGLPTSELASHFQSHIVRMGVTHGRDRVIMHCHATNLIALSYVLELNTATFTRELWEGSTECLVVFPDGVGIVPWMVPGTDSIGDATSEQMKRHSLVLWPFHGIFGTGPTLDEAFGLIDTAEKSAEVMVKVRSMGGKKQTISTEELIALGKRFGVTPLEAALRV.

Residue E117 is part of the active site. 3 residues coordinate Zn(2+): H141, H143, and H212.

It belongs to the aldolase class II family. RhaD subfamily. In terms of assembly, homotetramer. Zn(2+) serves as cofactor.

Its subcellular location is the cytoplasm. The catalysed reaction is L-rhamnulose 1-phosphate = (S)-lactaldehyde + dihydroxyacetone phosphate. The protein operates within carbohydrate degradation; L-rhamnose degradation; glycerone phosphate from L-rhamnose: step 3/3. Functionally, catalyzes the reversible cleavage of L-rhamnulose-1-phosphate to dihydroxyacetone phosphate (DHAP) and L-lactaldehyde. The polypeptide is Rhamnulose-1-phosphate aldolase (Pectobacterium atrosepticum (strain SCRI 1043 / ATCC BAA-672) (Erwinia carotovora subsp. atroseptica)).